The following is a 218-amino-acid chain: Protein-methionine-sulfoxide reductase heme-binding subunit MsrQ (218 aa).

The next 5 helical transmembrane spans lie at 14–34 (AVHA…WQVW), 60–80 (LLLI…AVLI), 86–106 (LGLY…WLDL), 121–141 (PYIT…ITST), and 155–175 (LHML…WLVK).

The protein belongs to the MsrQ family. As to quaternary structure, heterodimer of a catalytic subunit (MsrP) and a heme-binding subunit (MsrQ). The cofactor is FMN. Heme b is required as a cofactor.

It localises to the cell inner membrane. Its function is as follows. Part of the MsrPQ system that repairs oxidized periplasmic proteins containing methionine sulfoxide residues (Met-O), using respiratory chain electrons. Thus protects these proteins from oxidative-stress damage caused by reactive species of oxygen and chlorine generated by the host defense mechanisms. MsrPQ is essential for the maintenance of envelope integrity under bleach stress, rescuing a wide series of structurally unrelated periplasmic proteins from methionine oxidation. MsrQ provides electrons for reduction to the reductase catalytic subunit MsrP, using the quinone pool of the respiratory chain. The protein is Protein-methionine-sulfoxide reductase heme-binding subunit MsrQ of Xanthomonas campestris pv. campestris (strain B100).